A 377-amino-acid polypeptide reads, in one-letter code: Circumsporozoite protein (377 aa).

A signal peptide spans 1–22 (MKNFILLAVSSILLVDLFPTHC). The disordered stretch occupies residues 51–294 (HVGQSASRGR…NNEGANAPNE (244 aa)). The span at 72 to 100 (DAKKKKDGKKAEPKNPRENKLKQPGDRAD) shows a compositional bias: basic and acidic residues. The segment at 80–88 (KKAEPKNPR) is required for the binding to heparan sulfate proteoglycans (HSPGs) on the surface of host hepatocytes. The tract at residues 91–95 (KLKQP) is region I; contains the proteolytic cleavage site. 20 repeat units span residues 95 to 103 (PGDRADGQP), 104 to 112 (AGDRADGQP), 113 to 121 (AGDRADGQP), 122 to 130 (AGDRADGQP), 131 to 139 (AGDRAAGQP), 140 to 148 (AGDRADGQP), 149 to 157 (AGDRADGQP), 158 to 166 (AGDRADGQP), 167 to 175 (AGDRADGQP), 176 to 184 (AGDRAAGQP), 185 to 193 (AGDRAAGQP), 194 to 202 (AGDRADGQP), 203 to 211 (AGDRAAGQP), 212 to 220 (AGDRADGQP), 221 to 229 (AGDRAAGQP), 230 to 238 (AGDRADGQP), 239 to 247 (AGDRAAGQP), 248 to 256 (AGDRAAGQP), 257 to 265 (AGDRAAGQA), and 266 to 274 (AGDRAAGQA). Positions 95–274 (PGDRADGQPA…AAGDRAAGQA (180 aa)) are 20 X 9 AA tandem repeats of [PA]-G-D-R-A-[DA]-G-Q-[PA]. Positions 236–273 (GQPAGDRAAGQPAGDRAAGQPAGDRAAGQAAGDRAAGQ) are enriched in low complexity. The segment covering 274–283 (AAGGNAGGQG) has biased composition (gly residues). Over residues 284–293 (QNNEGANAPN) the composition is skewed to low complexity. The TSP type-1 domain occupies 303-355 (KVRATVGTEWTPCSVTCGVGVRVRRRVNAANKKPEDLTLNDLETDVCTMDKCA). 2 disulfide bridges follow: cysteine 315–cysteine 349 and cysteine 319–cysteine 354. Residue threonine 318 is glycosylated (O-linked (Fuc) threonine). Cysteine 354 carries the GPI-anchor amidated cysteine lipid modification. Residues 355 to 377 (AGIFNVVSNSLGLVILLVLALFN) constitute a propeptide, removed in mature form.

It belongs to the plasmodium circumsporozoite protein family. During host cell invasion, proteolytically cleaved at the cell membrane in the region I by a papain-like cysteine protease of parasite origin. Cleavage is triggered by the sporozoite contact with highly sulfated heparan sulfate proteoglycans (HSPGs) present on the host hepatocyte cell surface. Cleavage exposes the TSP type-1 (TSR) domain and is required for productive invasion of host hepatocytes but not for adhesion to the host cell membrane. Cleavage is dispensable for sporozoite development in the oocyst, motility and for traversal of host and vector cells. In terms of processing, O-glycosylated; maybe by POFUT2.

The protein resides in the cell membrane. The protein localises to the cytoplasm. In terms of biological role, essential sporozoite protein. In the mosquito vector, required for sporozoite development in the oocyst, migration through the vector hemolymph and entry into the vector salivary glands. In the vertebrate host, required for sporozoite migration through the host dermis and infection of host hepatocytes. Binds to highly sulfated heparan sulfate proteoglycans (HSPGs) on the surface of host hepatocytes. In the vertebrate host, binds to highly sulfated heparan sulfate proteoglycans (HSPGs) on the surface of host hepatocytes and is required for sporozoite invasion of the host hepatocytes. In Plasmodium vivax (strain Salvador I), this protein is Circumsporozoite protein.